Reading from the N-terminus, the 238-residue chain is Protein CPn_0658/CP_0089/CPj0658/CpB0684 (238 aa).

This sequence belongs to the chlamydial CPn_0658/CT_538/TC_0825 family.

This Chlamydia pneumoniae (Chlamydophila pneumoniae) protein is Protein CPn_0658/CP_0089/CPj0658/CpB0684.